A 202-amino-acid polypeptide reads, in one-letter code: Small ribosomal subunit protein uS4c (202 aa).

Positions 90-153 (MRLDNVIFRL…KSETIISKNI (64 aa)) constitute an S4 RNA-binding domain.

The protein belongs to the universal ribosomal protein uS4 family. In terms of assembly, part of the 30S ribosomal subunit. Contacts protein S5. The interaction surface between S4 and S5 is involved in control of translational fidelity.

The protein resides in the plastid. Its subcellular location is the chloroplast. In terms of biological role, one of the primary rRNA binding proteins, it binds directly to 16S rRNA where it nucleates assembly of the body of the 30S subunit. Its function is as follows. With S5 and S12 plays an important role in translational accuracy. The protein is Small ribosomal subunit protein uS4c (rps4) of Sphaerocarpos donnelli (Liverwort).